Consider the following 157-residue polypeptide: SsrA-binding protein (157 aa).

The tract at residues 132 to 157 (VHDKRQAQKDKDWAREKDRLFKKAYK) is disordered. The span at 135 to 157 (KRQAQKDKDWAREKDRLFKKAYK) shows a compositional bias: basic and acidic residues.

It belongs to the SmpB family.

The protein resides in the cytoplasm. Functionally, required for rescue of stalled ribosomes mediated by trans-translation. Binds to transfer-messenger RNA (tmRNA), required for stable association of tmRNA with ribosomes. tmRNA and SmpB together mimic tRNA shape, replacing the anticodon stem-loop with SmpB. tmRNA is encoded by the ssrA gene; the 2 termini fold to resemble tRNA(Ala) and it encodes a 'tag peptide', a short internal open reading frame. During trans-translation Ala-aminoacylated tmRNA acts like a tRNA, entering the A-site of stalled ribosomes, displacing the stalled mRNA. The ribosome then switches to translate the ORF on the tmRNA; the nascent peptide is terminated with the 'tag peptide' encoded by the tmRNA and targeted for degradation. The ribosome is freed to recommence translation, which seems to be the essential function of trans-translation. The sequence is that of SsrA-binding protein from Francisella tularensis subsp. tularensis (strain FSC 198).